A 131-amino-acid chain; its full sequence is UPF0251 protein MMP0619 (131 aa).

The protein belongs to the UPF0251 family.

The protein is UPF0251 protein MMP0619 of Methanococcus maripaludis (strain DSM 14266 / JCM 13030 / NBRC 101832 / S2 / LL).